Here is a 217-residue protein sequence, read N- to C-terminus: Putative oxidative stress regulator AosR (217 aa).

Positions 5 to 9 match the CXXXC motif; sequence CGRRC. Cys-5 and Cys-9 are oxidised to a cystine.

Belongs to the AosR family.

The chain is Putative oxidative stress regulator AosR from Mycobacterium leprae (strain TN).